The sequence spans 199 residues: Protein Maeo_0138 (199 aa).

One can recognise an AMMECR1 domain in the interval 7-197 (EEGKFAVKFA…ELSPNGKIVE (191 aa)).

The sequence is that of Protein Maeo_0138 from Methanococcus aeolicus (strain ATCC BAA-1280 / DSM 17508 / OCM 812 / Nankai-3).